The following is a 101-amino-acid chain: Small ribosomal subunit protein uS14 (101 aa).

This sequence belongs to the universal ribosomal protein uS14 family. In terms of assembly, part of the 30S ribosomal subunit. Contacts proteins S3 and S10.

In terms of biological role, binds 16S rRNA, required for the assembly of 30S particles and may also be responsible for determining the conformation of the 16S rRNA at the A site. The chain is Small ribosomal subunit protein uS14 from Burkholderia ambifaria (strain MC40-6).